Consider the following 316-residue polypeptide: Beta-ketoacyl-[acyl-carrier-protein] synthase III (316 aa).

Active-site residues include C112 and H243. An ACP-binding region spans residues 244–248 (QANLR). Residue N273 is part of the active site.

It belongs to the thiolase-like superfamily. FabH family. In terms of assembly, homodimer.

It localises to the cytoplasm. The catalysed reaction is malonyl-[ACP] + acetyl-CoA + H(+) = 3-oxobutanoyl-[ACP] + CO2 + CoA. Its pathway is lipid metabolism; fatty acid biosynthesis. Functionally, catalyzes the condensation reaction of fatty acid synthesis by the addition to an acyl acceptor of two carbons from malonyl-ACP. Catalyzes the first condensation reaction which initiates fatty acid synthesis and may therefore play a role in governing the total rate of fatty acid production. Possesses both acetoacetyl-ACP synthase and acetyl transacylase activities. Its substrate specificity determines the biosynthesis of branched-chain and/or straight-chain of fatty acids. This Yersinia pseudotuberculosis serotype O:1b (strain IP 31758) protein is Beta-ketoacyl-[acyl-carrier-protein] synthase III.